Reading from the N-terminus, the 1481-residue chain is Cystic fibrosis transmembrane conductance regulator (1481 aa).

Over 1–77 (MQRSPLEKAS…KLINALRRCF (77 aa)) the chain is Cytoplasmic. The chain crosses the membrane as a helical span at residues 78–98 (FWRFMFYGILLYLGEVTKAVQ). Residues 81-365 (FMFYGILLYL…WAVQTWYDSL (285 aa)) form the ABC transmembrane type-1 1 domain. Topologically, residues 99–122 (PLLLGRIIASYDPDNKEERSIAIY) are extracellular. A helical transmembrane segment spans residues 123 to 146 (LGIGLCLLFIVRTLLLHPAIFGLH). The Cytoplasmic segment spans residues 147 to 195 (HIGMQMRIAMFSLIYKKTLKLSSRVLDKISIGQLVSLLSNNLNKFDEGL). A helical membrane pass occupies residues 196–216 (ALAHFVWIVPLQVALLMGLIW). Over 217–222 (ELLQAS) the chain is Extracellular. The chain crosses the membrane as a helical span at residues 223-243 (AFCGLGFLIVLALFQAGLGRM). At 244–298 (MMKYRDQRAGKINERLVITSEMIENIQSVKAYCWEEAMEKMIENLRQTELKLTRK) the chain is on the cytoplasmic side. Residues 299 to 319 (AAYVRYFNSSAFFFSGFFVVF) traverse the membrane as a helical segment. The Extracellular portion of the chain corresponds to 320 to 339 (LSVLPYALIKGIVLRKIFTT). Residues 340–358 (ISFCIVLRMAVTRQFPWAV) traverse the membrane as a helical segment. Topologically, residues 359-858 (QTWYDSLGAI…YLRYITVHKS (500 aa)) are cytoplasmic. ATP is bound by residues tryptophan 401, serine 434, 458–465 (GSTGAGKT), and glutamine 493. The ABC transporter 1 domain maps to 423 to 646 (NDDDSLFFSN…RPDFSSKLMG (224 aa)). Residue cysteine 524 is the site of S-palmitoyl cysteine attachment. Phosphoserine is present on residues serine 549 and serine 660. The tract at residues 654–831 (SAERRNSILT…EEINEEDLKE (178 aa)) is disordered R region. Residue serine 670 is modified to Phosphoserine; by PKA. Serine 686 is modified (phosphoserine). Lysine 688 participates in a covalent cross-link: Glycyl lysine isopeptide (Lys-Gly) (interchain with G-Cter in ubiquitin). Phosphoserine occurs at positions 700 and 712. Threonine 717 carries the post-translational modification Phosphothreonine. Residues serine 737, serine 753, serine 768, serine 790, serine 795, and serine 813 each carry the phosphoserine modification. Residues 859 to 879 (LIFVLIWCLVIFLAEVAASLV) traverse the membrane as a helical segment. Positions 859–1155 (LIFVLIWCLV…AVNSSIDVDS (297 aa)) constitute an ABC transmembrane type-1 2 domain. The Extracellular portion of the chain corresponds to 880–918 (VLWFLGNTPPQDKGNSTYSRNNSYAVIITRTSSYYVFYI). Residues asparagine 894 and asparagine 900 are each glycosylated (N-linked (GlcNAc...) asparagine). A discontinuously helical transmembrane segment spans residues 919 to 939 (YVGVADTLLAMGFFRGLPLVH). Over 940–990 (TLITVSKILHHKMLHSVLQAPMSTLNTLKAGGILNRFSKDIAILDDLLPLT) the chain is Cytoplasmic. Residues 991 to 1011 (IFDFIQLLLIVIGAIAVVAVL) form a helical membrane-spanning segment. Residues 1012–1013 (QP) are Extracellular-facing. A helical transmembrane segment spans residues 1014 to 1034 (YIFVATVPVIVAFIMLRAYFL). Over 1035–1095 (QTSQQLKQLE…TANWFLYLST (61 aa)) the chain is Cytoplasmic. A helical membrane pass occupies residues 1096–1116 (LRWFQMRIEMIFVIFFIAVTF). Residues 1117–1130 (ISILTTGEGEGTVG) lie on the Extracellular side of the membrane. A helical membrane pass occupies residues 1131 to 1151 (IILTLAMNIMSTLQWAVNSSI). At 1152-1481 (DVDSLMRSVS…TEEEVQDTRL (330 aa)) the chain is on the cytoplasmic side. One can recognise an ABC transporter 2 domain in the interval 1211-1444 (MTVKDLTAKY…RSLFRQAISP (234 aa)). ATP is bound by residues tyrosine 1220 and 1245–1252 (GRTGSGKS). An interaction with GORASP2 region spans residues 1387-1481 (RTLKQAFADC…TEEEVQDTRL (95 aa)). Cysteine 1396 carries S-palmitoyl cysteine lipidation. Phosphoserine occurs at positions 1445 and 1457. The interval 1462-1481 (QPQIAALKEETEEEVQDTRL) is disordered. The segment covering 1471–1481 (ETEEEVQDTRL) has biased composition (acidic residues). Residues 1479–1481 (TRL) carry the PDZ-binding motif.

This sequence belongs to the ABC transporter superfamily. ABCC family. CFTR transporter (TC 3.A.1.202) subfamily. As to quaternary structure, monomer; does not require oligomerization for channel activity. May form oligomers in the membrane. Interacts with SLC26A3, SLC26A6 and NHERF1. Interacts with SHANK2. Interacts with MYO6. Interacts (via C-terminus) with GOPC (via PDZ domain); this promotes CFTR internalization and thereby decreases channel activity. Interacts with SLC4A7 through NHERF1. Found in a complex with MYO5B and RAB11A. Interacts with ANO1. Interacts with SLC26A8. Interacts with AHCYL1; the interaction increases CFTR activity. Interacts with CSE1L. The core-glycosylated form interacts with GORASP2 (via PDZ GRASP-type 1 domain) in respone to ER stress. Interacts with MARCHF2; the interaction leads to CFTR ubiqtuitination and degradation. Interacts with ADGRG2. N-glycosylated. Post-translationally, phosphorylated; cAMP treatment promotes phosphorylation and activates the channel. Dephosphorylation decreases the ATPase activity (in vitro). Phosphorylation at PKA sites activates the channel. Phosphorylation at PKC sites enhances the response to phosphorylation by PKA. Phosphorylated by AMPK; this inhibits channel activity. In terms of processing, ubiquitinated, leading to its degradation in the lysosome. Deubiquitination by USP10 in early endosomes enhances its endocytic recycling to the cell membrane. Ubiquitinated by RNF185 during ER stress. Ubiquitinated by MARCHF2.

The protein localises to the apical cell membrane. It is found in the early endosome membrane. Its subcellular location is the cell membrane. It localises to the recycling endosome membrane. The protein resides in the endoplasmic reticulum membrane. The protein localises to the nucleus. The catalysed reaction is ATP + H2O + closed Cl(-) channel = ADP + phosphate + open Cl(-) channel.. The enzyme catalyses chloride(in) = chloride(out). It carries out the reaction hydrogencarbonate(in) = hydrogencarbonate(out). It catalyses the reaction ATP + H2O = ADP + phosphate + H(+). Epithelial ion channel that plays an important role in the regulation of epithelial ion and water transport and fluid homeostasis. Mediates the transport of chloride ions across the cell membrane. Possesses an intrinsic ATPase activity and utilizes ATP to gate its channel; the passive flow of anions through the channel is gated by cycles of ATP binding and hydrolysis by the ATP-binding domains. The ion channel is also permeable to HCO(3)(-); selectivity depends on the extracellular chloride concentration. Exerts its function also by modulating the activity of other ion channels and transporters. Contributes to the regulation of the pH and the ion content of the epithelial fluid layer. Modulates the activity of the epithelial sodium channel (ENaC) complex, in part by regulating the cell surface expression of the ENaC complex. May regulate bicarbonate secretion and salvage in epithelial cells by regulating the transporter SLC4A7. Can inhibit the chloride channel activity of ANO1. Plays a role in the chloride and bicarbonate homeostasis during sperm epididymal maturation and capacitation. The polypeptide is Cystic fibrosis transmembrane conductance regulator (Chlorocebus aethiops (Green monkey)).